Here is a 104-residue protein sequence, read N- to C-terminus: Large ribosomal subunit protein bL21 (104 aa).

This sequence belongs to the bacterial ribosomal protein bL21 family. As to quaternary structure, part of the 50S ribosomal subunit. Contacts protein L20.

Its function is as follows. This protein binds to 23S rRNA in the presence of protein L20. The protein is Large ribosomal subunit protein bL21 of Francisella philomiragia subsp. philomiragia (strain ATCC 25017 / CCUG 19701 / FSC 153 / O#319-036).